The following is a 634-amino-acid chain: DNA-directed RNA polymerase subunit gamma (634 aa).

4 residues coordinate Zn(2+): cysteine 74, cysteine 76, cysteine 89, and cysteine 92. Mg(2+) contacts are provided by aspartate 471, aspartate 473, and aspartate 475.

It belongs to the RNA polymerase beta' chain family. RpoC1 subfamily. In cyanobacteria the RNAP catalytic core is composed of 2 alpha, 1 beta, 1 beta', 1 gamma and 1 omega subunit. When a sigma factor is associated with the core the holoenzyme is formed, which can initiate transcription. The cofactor is Mg(2+). Requires Zn(2+) as cofactor.

It carries out the reaction RNA(n) + a ribonucleoside 5'-triphosphate = RNA(n+1) + diphosphate. Functionally, DNA-dependent RNA polymerase catalyzes the transcription of DNA into RNA using the four ribonucleoside triphosphates as substrates. The chain is DNA-directed RNA polymerase subunit gamma from Synechococcus sp. (strain WH7803).